A 537-amino-acid polypeptide reads, in one-letter code: Frizzled-4 (537 aa).

The signal sequence occupies residues 1–36 (MAWRGAGPSVPGAPGGVGLSLGLLLQLLLLLGPARG). Residues 37 to 212 (FGDEEERRCD…KCGYDAGLYS (176 aa)) are Extracellular-facing. In terms of domain architecture, FZ spans 40-161 (EEERRCDPIR…NDHNHMCMEG (122 aa)). Disulfide bonds link Cys45–Cys106, Cys53–Cys99, Cys90–Cys128, Cys117–Cys158, Cys121–Cys145, Cys181–Cys200, Cys204–Cys282, and Cys302–Cys377. The N-linked (GlcNAc...) asparagine glycan is linked to Asn59. An N-linked (GlcNAc...) asparagine glycan is attached at Asn144. The helical transmembrane segment at 213-243 (RSAKEFTDIWMAVWASLCFISTAFTVLTFLI) threads the bilayer. The Cytoplasmic portion of the chain corresponds to 244 to 249 (DSSRFS). The chain crosses the membrane as a helical span at residues 250 to 275 (YPERPIIFLSMCYNIYSIAYIVRLTV). Residues 276 to 299 (GRERISCDFEEAAEPVLIQEGLKN) lie on the Extracellular side of the membrane. A helical membrane pass occupies residues 300–333 (TGCAIIFLLMYFFGMASSIWWVILTLTWFLAAGL). At 334-336 (KWG) the chain is on the cytoplasmic side. The helical transmembrane segment at 337–365 (HEAIEMHSSYFHIAAWAIPAVKTIVILIM) threads the bilayer. Residues 366 to 383 (RLVDADELTGLCYVGNQN) are Extracellular-facing. Residues 384–418 (LDALTGFVVAPLFTYLVIGTLFIAAGLVALFKIRS) traverse the membrane as a helical segment. At 419–431 (NLQKDGTKTDKLE) the chain is on the cytoplasmic side. A helical membrane pass occupies residues 432-460 (RLMVKIGVFSVLYTVPATCVIACYFYEIS). The Extracellular portion of the chain corresponds to 461–473 (NWALFRYSADDSN). Residues 474-495 (MAVEMLKIFMSLLVGITSGMWI) form a helical membrane-spanning segment. At 496 to 537 (WSAKTLHTWQKCSNRLVNSGKVKREKRGNGWVKPGKGSETVV) the chain is on the cytoplasmic side. The Lys-Thr-X-X-X-Trp motif, mediates interaction with the PDZ domain of Dvl family members motif lies at 499–504 (KTLHTW). A PDZ-binding motif is present at residues 535–537 (TVV).

It belongs to the G-protein coupled receptor Fz/Smo family. In terms of assembly, interacts with MAGI3 and NDP. Component of a complex, at least composed of TSPAN12, FZD4 and norrin (NDP). Interacts (via FZ domain) with TSKU; TSKU competes with WNT2B for binding to FZD4, inhibiting Wnt signaling and repressing peripheral eye development. Interacts with glypican GPC3. Ubiquitinated by ZNRF3, leading to its degradation by the proteasome. Almost ubiquitous. Largely expressed in adult heart, skeletal muscle, ovary, and fetal kidney. Moderate amounts in adult liver, kidney, pancreas, spleen, and fetal lung, and small amounts in placenta, adult lung, prostate, testis, colon, fetal brain and liver.

Its subcellular location is the cell membrane. Its function is as follows. Receptor for Wnt proteins. Most frizzled receptors are coupled to the beta-catenin (CTNNB1) canonical signaling pathway, which leads to the activation of disheveled proteins, inhibition of GSK-3 kinase, nuclear accumulation of beta-catenin (CTNNB1) and activation of Wnt target genes. Plays a critical role in retinal vascularization by acting as a receptor for Wnt proteins and norrin (NDP). In retina, it can be activated by Wnt protein-binding and also by Wnt-independent signaling via binding of norrin (NDP), promoting in both cases beta-catenin (CTNNB1) accumulation and stimulation of LEF/TCF-mediated transcriptional programs. A second signaling pathway involving PKC and calcium fluxes has been seen for some family members, but it is not yet clear if it represents a distinct pathway or if it can be integrated in the canonical pathway, as PKC seems to be required for Wnt-mediated inactivation of GSK-3 kinase. Both pathways seem to involve interactions with G-proteins. May be involved in transduction and intercellular transmission of polarity information during tissue morphogenesis and/or in differentiated tissues. This is Frizzled-4 (FZD4) from Homo sapiens (Human).